We begin with the raw amino-acid sequence, 33 residues long: Gastrin (33 aa).

At Q1 the chain carries Pyrrolidone carboxylic acid. Residue F33 is modified to Phenylalanine amide.

The protein belongs to the gastrin/cholecystokinin family.

The protein localises to the secreted. Its function is as follows. Gastrin stimulates the stomach mucosa to produce and secrete hydrochloric acid and the pancreas to secrete its digestive enzymes. It also stimulates smooth muscle contraction and increases blood circulation and water secretion in the stomach and intestine. The polypeptide is Gastrin (GAST) (Cavia porcellus (Guinea pig)).